Consider the following 132-residue polypeptide: Histone H2A (132 aa).

The span at 1–10 (MTGGKSGGKA) shows a compositional bias: gly residues. The tract at residues 1 to 24 (MTGGKSGGKASGSKNAQSRSSKAG) is disordered. 2 positions are modified to N6-acetyllysine: Lys-5 and Lys-9. Gln-106 carries the N5-methylglutamine modification. Ser-129 carries the post-translational modification Phosphoserine. The [ST]-Q motif signature appears at 129–130 (SQ).

This sequence belongs to the histone H2A family. The nucleosome is a histone octamer containing two molecules each of H2A, H2B, H3 and H4 assembled in one H3-H4 heterotetramer and two H2A-H2B heterodimers. The octamer wraps approximately 147 bp of DNA. Post-translationally, phosphorylated to form H2AS128ph (gamma-H2A) in response to DNA double-strand breaks (DSBs) generated by exogenous genotoxic agents and by stalled replication forks. Phosphorylation is dependent on the DNA damage checkpoint kinases mec1/ATR and tel1/ATM, spreads on either side of a detected DSB site and may mark the surrounding chromatin for recruitment of proteins required for DNA damage signaling and repair. Gamma-H2A is removed from the DNA prior to the strand invasion-primer extension step of the repair process and subsequently dephosphorylated. Dephosphorylation is necessary for efficient recovery from the DNA damage checkpoint. Acetylated by esa1 to form H2AK4ac and H2AK7ac.

Its subcellular location is the nucleus. The protein localises to the chromosome. Core component of nucleosome which plays a central role in DNA double strand break (DSB) repair. Nucleosomes wrap and compact DNA into chromatin, limiting DNA accessibility to the cellular machineries which require DNA as a template. Histones thereby play a central role in transcription regulation, DNA repair, DNA replication and chromosomal stability. DNA accessibility is regulated via a complex set of post-translational modifications of histones, also called histone code, and nucleosome remodeling. The polypeptide is Histone H2A (htaA) (Emericella nidulans (strain FGSC A4 / ATCC 38163 / CBS 112.46 / NRRL 194 / M139) (Aspergillus nidulans)).